Reading from the N-terminus, the 229-residue chain is Flagellar L-ring protein (229 aa).

The N-terminal stretch at 1–25 is a signal peptide; sequence MKQVRLLPPAPVRAVCALAVAALAG. Cys-26 carries the N-palmitoyl cysteine lipid modification. Residue Cys-26 is the site of S-diacylglycerol cysteine attachment.

It belongs to the FlgH family. As to quaternary structure, the basal body constitutes a major portion of the flagellar organelle and consists of four rings (L,P,S, and M) mounted on a central rod.

Its subcellular location is the cell outer membrane. The protein resides in the bacterial flagellum basal body. Its function is as follows. Assembles around the rod to form the L-ring and probably protects the motor/basal body from shearing forces during rotation. The chain is Flagellar L-ring protein from Burkholderia ambifaria (strain ATCC BAA-244 / DSM 16087 / CCUG 44356 / LMG 19182 / AMMD) (Burkholderia cepacia (strain AMMD)).